Consider the following 498-residue polypeptide: ATP synthase subunit beta, chloroplastic (498 aa).

172-179 (GGAGVGKT) contributes to the ATP binding site.

Belongs to the ATPase alpha/beta chains family. As to quaternary structure, F-type ATPases have 2 components, CF(1) - the catalytic core - and CF(0) - the membrane proton channel. CF(1) has five subunits: alpha(3), beta(3), gamma(1), delta(1), epsilon(1). CF(0) has four main subunits: a(1), b(1), b'(1) and c(9-12).

It localises to the plastid. It is found in the chloroplast thylakoid membrane. It carries out the reaction ATP + H2O + 4 H(+)(in) = ADP + phosphate + 5 H(+)(out). Functionally, produces ATP from ADP in the presence of a proton gradient across the membrane. The catalytic sites are hosted primarily by the beta subunits. In Nymphaea odorata (White water lily), this protein is ATP synthase subunit beta, chloroplastic.